The sequence spans 411 residues: MATHYSIIGGMIIVVLLMIIGSEGGRLLEKKNRTSAEAEHYNVRRYLAENGLGQTPPMGWNSWNHFGCDINENVVRETADAMVSTGLAALGYQYINLDDCWAELNRDSEGNMVPNAAAFPSGIKALADYVHSKGLKLGVYSDAGNQTCSKRMPGSLGHEEQDAKTFASWGVDYLKYDNCENLGISVKERYPPMGKALLSSGRPIFFSMCEWGWEDPQIWAKSIGNSWRTTGDIEDNWNSMTSIADSNDKWASYAGPGGWNDPDMLEVGNGGMTTEEYRSHFSIWALAKAPLLVGCDIRAMDDTTHELISNAEVIAVNQDKLGVQGKKVKSTNDLEVWAGPLSDNKVAVILWNRSSSRATVTASWSDIGLQQGTTVDARDLWEHSTQSLVSGEISAEIDSHACKMYVLTPRS.

A signal peptide spans 1-24 (MATHYSIIGGMIIVVLLMIIGSEG). Residues 25–47 (GRLLEKKNRTSAEAEHYNVRRYL) constitute a propeptide that is removed on maturation. Residue Asn32 is glycosylated (N-linked (GlcNAc...) asparagine). Cys68 and Cys100 are disulfide-bonded. The N-linked (GlcNAc...) asparagine glycan is linked to Asn145. A disulfide bond links Cys148 and Cys179. Residue Asp177 is the Nucleophile of the active site. 210–214 (EWGWE) provides a ligand contact to substrate. Asp232 functions as the Proton donor in the catalytic mechanism. Asn352 is a glycosylation site (N-linked (GlcNAc...) asparagine).

This sequence belongs to the glycosyl hydrolase 27 family.

The enzyme catalyses Hydrolysis of terminal, non-reducing alpha-D-galactose residues in alpha-D-galactosides, including galactose oligosaccharides, galactomannans and galactolipids.. In terms of biological role, involved in the hydrolysis of the galactomannan, it splits alpha-linked galactose moieties. It is particularly suitable for the hydrolysis of guar gum to a gum with improved gelling properties. Preferentially cleaves alpha-1,6 glycoside linkages. This Cyamopsis tetragonoloba (Guar) protein is Alpha-galactosidase.